A 100-amino-acid chain; its full sequence is NAD(P)H-quinone oxidoreductase subunit 4L, chloroplastic (100 aa).

Transmembrane regions (helical) follow at residues methionine 1 to isoleucine 21, alanine 29 to asparagine 49, and isoleucine 63 to isoleucine 83.

The protein belongs to the complex I subunit 4L family. In terms of assembly, NDH is composed of at least 16 different subunits, 5 of which are encoded in the nucleus.

It is found in the plastid. Its subcellular location is the chloroplast thylakoid membrane. The catalysed reaction is a plastoquinone + NADH + (n+1) H(+)(in) = a plastoquinol + NAD(+) + n H(+)(out). It catalyses the reaction a plastoquinone + NADPH + (n+1) H(+)(in) = a plastoquinol + NADP(+) + n H(+)(out). Its function is as follows. NDH shuttles electrons from NAD(P)H:plastoquinone, via FMN and iron-sulfur (Fe-S) centers, to quinones in the photosynthetic chain and possibly in a chloroplast respiratory chain. The immediate electron acceptor for the enzyme in this species is believed to be plastoquinone. Couples the redox reaction to proton translocation, and thus conserves the redox energy in a proton gradient. The protein is NAD(P)H-quinone oxidoreductase subunit 4L, chloroplastic of Angiopteris evecta (Mule's foot fern).